A 482-amino-acid polypeptide reads, in one-letter code: UDP-glycosyltransferase 1 (482 aa).

N-linked (GlcNAc...) asparagine glycosylation is present at asparagine 243. The chain crosses the membrane as a helical span at residues 450-470; it reads IYLVYALVLGSAWWIGKTILG.

This sequence belongs to the glycosyltransferase 28 family.

It localises to the membrane. The enzyme catalyses exophillate aglycone + UDP-alpha-D-glucose = exophillate + UDP + H(+). It participates in secondary metabolite biosynthesis. Acts as a depside 2-O-glucosyltransferase that catalyzes the first glycosylation step during phaeomoniecin D biosynthesis by producing the intermediate exophillic acid which is further O-galactosylated into phaeomoniecin D by the C-galactosyltransferase OGT2. In Phaeomoniella chlamydospora (Phaeoacremonium chlamydosporum), this protein is UDP-glycosyltransferase 1.